The chain runs to 107 residues: U-scoloptoxin(19)-Sm1a (107 aa).

The N-terminal stretch at methionine 1 to glycine 20 is a signal peptide.

This sequence belongs to the scoloptoxin-19 family. Post-translationally, contains 6 disulfide bonds. Expressed by the venom gland.

It is found in the secreted. This Scolopendra morsitans (Tanzanian blue ringleg centipede) protein is U-scoloptoxin(19)-Sm1a.